The following is a 160-amino-acid chain: Transcription elongation factor GreA (160 aa).

The stretch at 43–75 (LSENAEYEAAREQQAQMESKIVDLENKLTRASI) forms a coiled coil.

The protein belongs to the GreA/GreB family.

Necessary for efficient RNA polymerase transcription elongation past template-encoded arresting sites. The arresting sites in DNA have the property of trapping a certain fraction of elongating RNA polymerases that pass through, resulting in locked ternary complexes. Cleavage of the nascent transcript by cleavage factors such as GreA or GreB allows the resumption of elongation from the new 3'terminus. GreA releases sequences of 2 to 3 nucleotides. The polypeptide is Transcription elongation factor GreA (Prosthecochloris aestuarii (strain DSM 271 / SK 413)).